The primary structure comprises 728 residues: Phosphoribosylformylglycinamidine synthase subunit PurL (728 aa).

His-42 is an active-site residue. Residues Tyr-45 and Lys-84 each contribute to the ATP site. A Mg(2+)-binding site is contributed by Glu-86. Substrate contacts are provided by residues 87-90 (SHNH) and Arg-109. Catalysis depends on His-88, which acts as the Proton acceptor. A Mg(2+)-binding site is contributed by Asp-110. Gln-237 is a substrate binding site. Asp-265 contributes to the Mg(2+) binding site. 309-311 (ESQ) contacts substrate. The ATP site is built by Asp-491 and Gly-528. Residue Asn-529 participates in Mg(2+) binding. Residue Ser-531 coordinates substrate.

It belongs to the FGAMS family. Monomer. Part of the FGAM synthase complex composed of 1 PurL, 1 PurQ and 2 PurS subunits.

Its subcellular location is the cytoplasm. The catalysed reaction is N(2)-formyl-N(1)-(5-phospho-beta-D-ribosyl)glycinamide + L-glutamine + ATP + H2O = 2-formamido-N(1)-(5-O-phospho-beta-D-ribosyl)acetamidine + L-glutamate + ADP + phosphate + H(+). The protein operates within purine metabolism; IMP biosynthesis via de novo pathway; 5-amino-1-(5-phospho-D-ribosyl)imidazole from N(2)-formyl-N(1)-(5-phospho-D-ribosyl)glycinamide: step 1/2. Its function is as follows. Part of the phosphoribosylformylglycinamidine synthase complex involved in the purines biosynthetic pathway. Catalyzes the ATP-dependent conversion of formylglycinamide ribonucleotide (FGAR) and glutamine to yield formylglycinamidine ribonucleotide (FGAM) and glutamate. The FGAM synthase complex is composed of three subunits. PurQ produces an ammonia molecule by converting glutamine to glutamate. PurL transfers the ammonia molecule to FGAR to form FGAM in an ATP-dependent manner. PurS interacts with PurQ and PurL and is thought to assist in the transfer of the ammonia molecule from PurQ to PurL. The chain is Phosphoribosylformylglycinamidine synthase subunit PurL from Campylobacter jejuni subsp. jejuni serotype O:6 (strain 81116 / NCTC 11828).